The primary structure comprises 399 residues: Telomeric repeat-binding factor 2-interacting protein 1 (399 aa).

The residue at position 2 (Ala-2) is an N-acetylalanine. A phosphoserine mark is found at Ser-36 and Ser-43. Positions 78–101 (FISTQYILDCVERNERLELEAYRL) constitute a BRCT domain. A disordered region spans residues 104-132 (ASAADTGSEAKPGALAEGAAEPEPQRHAG). Low complexity predominate over residues 112 to 125 (EAKPGALAEGAAEP). Lys-114 is covalently cross-linked (Glycyl lysine isopeptide (Lys-Gly) (interchain with G-Cter in SUMO2)). Positions 128-188 (QRHAGRIAFT…SLKDRYLKHL (61 aa)) constitute a Myb-like domain. Residues Ser-154 and Ser-156 each carry the phosphoserine modification. A Glycyl lysine isopeptide (Lys-Gly) (interchain with G-Cter in SUMO2) cross-link involves residue Lys-194. Disordered stretches follow at residues 196 to 244 (LLGD…EEIQ) and 264 to 311 (VVVD…QPEV). 2 positions are modified to phosphoserine: Ser-203 and Ser-206. Glycyl lysine isopeptide (Lys-Gly) (interchain with G-Cter in SUMO2) cross-links involve residues Lys-208, Lys-212, and Lys-240. Positions 280–304 (CDDDPPTPEEDSETQPDEEEEEEEE) are enriched in acidic residues. A Glycyl lysine isopeptide (Lys-Gly) (interchain with G-Cter in SUMO2) cross-link involves residue Lys-372. The Nuclear localization signal motif lies at 383 to 399 (KKFGAQNVARRIEFRKK).

Belongs to the RAP1 family. Associates with the I-kappa-B-kinase (IKK) core complex, composed of CHUK, IKBKB and IKBKG. Homodimer. Component of the shelterin complex (telosome) composed of TERF1, TERF2, TINF2, TERF2IP ACD and POT1. Interacts with TERF2; the interaction is direct. Does not interact with TERF1. Interacts with SLX4/BTBD12. Ubiquitous. Highly expressed.

It is found in the nucleus. Its subcellular location is the cytoplasm. It localises to the chromosome. The protein localises to the telomere. In terms of biological role, acts both as a regulator of telomere function and as a transcription regulator. Involved in the regulation of telomere length and protection as a component of the shelterin complex (telosome). In contrast to other components of the shelterin complex, it is dispensible for telomere capping and does not participate in the protection of telomeres against non-homologous end-joining (NHEJ)-mediated repair. Instead, it is required to negatively regulate telomere recombination and is essential for repressing homology-directed repair (HDR), which can affect telomere length. Does not bind DNA directly: recruited to telomeric double-stranded 5'-TTAGGG-3' repeats via its interaction with TERF2. Independently of its function in telomeres, also acts as a transcription regulator: recruited to extratelomeric 5'-TTAGGG-3' sites via its association with TERF2 or other factors, and regulates gene expression. When cytoplasmic, associates with the I-kappa-B-kinase (IKK) complex and acts as a regulator of the NF-kappa-B signaling by promoting IKK-mediated phosphorylation of RELA/p65, leading to activate expression of NF-kappa-B target genes. This is Telomeric repeat-binding factor 2-interacting protein 1 (TERF2IP) from Homo sapiens (Human).